The following is a 138-amino-acid chain: MRHGKVHRKLNRTAEHRRAMFANMAAALIKHEQIVTTLPKAKELRPIVEKLVTLGKKGGLAMRRQAISEMRDKDQVKKLFDVLATRYKDRQGGYTRIIKAGFRYGDNAAMAVIEFVDRDVDAKGQDSGPVQEKEAEAA.

It belongs to the bacterial ribosomal protein bL17 family. As to quaternary structure, part of the 50S ribosomal subunit. Contacts protein L32.

The polypeptide is Large ribosomal subunit protein bL17 (Bradyrhizobium diazoefficiens (strain JCM 10833 / BCRC 13528 / IAM 13628 / NBRC 14792 / USDA 110)).